A 558-amino-acid polypeptide reads, in one-letter code: Atlastin-1 (558 aa).

The interval 1-28 is disordered; the sequence is MAKSRRDRNSWGGFSEKSSDWSSEEEEP. The segment at 1-34 is N-terminal hypervariable region (HVR); it reads MAKSRRDRNSWGGFSEKSSDWSSEEEEPVRKAGP. The Cytoplasmic portion of the chain corresponds to 1–449; the sequence is MAKSRRDRNS…NIFHAARTPA (449 aa). Phosphoserine occurs at positions 10, 22, and 23. The region spanning 64 to 309 is the GB1/RHD3-type G domain; sequence DKEVVAVSVA…LIPWLLSPER (246 aa). Residues Arg77, Lys78, Gly79, Lys80, Ser81, Phe82, Gln148, Arg217, Asp218, Val276, and Asn279 each contribute to the GDP site. 6 residues coordinate GTP: Arg77, Lys78, Gly79, Lys80, Ser81, and Phe82. Ser81 is a binding site for Mg(2+). Arg217, Asp218, and Val276 together coordinate GTP. The 3HB (three-helix bundle) domain stretch occupies residues 347-438; that stretch reads MLQATAEANN…YIQYIKHNDS (92 aa). Lys395 bears the N6-acetyllysine mark. The stretch at 412 to 439 forms a coiled coil; the sequence is EFSRRYLQQLESEIDELYIQYIKHNDSK. The segment at 439–447 is linker; that stretch reads KNIFHAART. The helical transmembrane segment at 450–470 threads the bilayer; the sequence is TLFVVIFITYVIAGVTGFIGL. Asp471 is a topological domain (lumenal). Residues 472–492 traverse the membrane as a helical segment; the sequence is IIASLCNMIMGLTLITLCTWA. At 493–558 the chain is on the cytoplasmic side; that stretch reads YIRYSGEYRE…PTQQPEKKKI (66 aa). Residues 521-558 form an autoinhibitory domain region; that stretch reads NEALYKLYSAAATHRHLCHQAFPAPKSEPTQQPEKKKI.

Belongs to the TRAFAC class dynamin-like GTPase superfamily. GB1/RHD3 GTPase family. GB1 subfamily. Monomeric and homodimeric. The homodimer, transiently formed by two molecules on opposing membranes, is the active form mediating ER membrane fusion. Interacts with REEP1, REEP5, RTN3 and RTN4 (via the transmembrane region); these proteins are involved in endoplasmic reticulum tubular network organization. Interacts with ZFYVE27; both proteins are involved in endoplasmic reticulum tubular network organization. Interacts with ARL6IP1; both proteins are involved in endoplasmic reticulum tubular network organization. Interacts with SPAST; the interaction is direct, could recruit SPAST to Golgi membranes. Interacts (via N-terminal region) with MAP4K4 (via CNH regulatory domain). May interact with TMED2. Interacts with CPT1C. Post-translationally, phosphorylated. Phosphorylation, by different kinases, of the N-terminal hypervariable region (HVR) regulates the ATL1-mediated membrane tethering step.

The protein resides in the endoplasmic reticulum membrane. Its subcellular location is the golgi apparatus membrane. It localises to the cell projection. The protein localises to the axon. It catalyses the reaction GTP + H2O = GDP + phosphate + H(+). Functionally, atlastin-1 (ATL1) is a membrane-anchored GTPase that mediates the GTP-dependent fusion of endoplasmic reticulum (ER) membranes, maintaining the continuous ER network. It facilitates the formation of three-way junctions where ER tubules intersect. Two atlastin-1 on neighboring ER tubules bind GTP and form loose homodimers through the GB1/RHD3-type G domains and 3HB regions. Upon GTP hydrolysis, the 3HB regions tighten, pulling the membranes together to drive their fusion. After fusion, the homodimer disassembles upon release of inorganic phosphate (Pi). Subsequently, GDP dissociates, resetting the monomers to a conformation ready for a new fusion cycle. May also regulate more or less directly Golgi biogenesis. Indirectly regulates axonal development. The protein is Atlastin-1 of Mus musculus (Mouse).